The chain runs to 146 residues: UPF0260 protein Swit_2819 (146 aa).

Belongs to the UPF0260 family.

In Rhizorhabdus wittichii (strain DSM 6014 / CCUG 31198 / JCM 15750 / NBRC 105917 / EY 4224 / RW1) (Sphingomonas wittichii), this protein is UPF0260 protein Swit_2819.